A 464-amino-acid polypeptide reads, in one-letter code: Glutamate--tRNA ligase 1 (464 aa).

The short motif at 10 to 20 is the 'HIGH' region element; it reads PSPTGYLHIGG. The short motif at 238-242 is the 'KMSKS' region element; the sequence is KLSKR. Residue lysine 241 participates in ATP binding.

Belongs to the class-I aminoacyl-tRNA synthetase family. Glutamate--tRNA ligase type 1 subfamily. In terms of assembly, monomer.

The protein resides in the cytoplasm. It carries out the reaction tRNA(Glu) + L-glutamate + ATP = L-glutamyl-tRNA(Glu) + AMP + diphosphate. Functionally, catalyzes the attachment of glutamate to tRNA(Glu) in a two-step reaction: glutamate is first activated by ATP to form Glu-AMP and then transferred to the acceptor end of tRNA(Glu). This chain is Glutamate--tRNA ligase 1, found in Helicobacter hepaticus (strain ATCC 51449 / 3B1).